The primary structure comprises 484 residues: Protein nucleotidyltransferase YdiU (484 aa).

The ATP site is built by G81, G83, R84, K103, D115, G116, R166, and R173. D244 acts as the Proton acceptor in catalysis. Mg(2+)-binding residues include N245 and D254. D254 is an ATP binding site.

The protein belongs to the SELO family. Requires Mg(2+) as cofactor. Mn(2+) serves as cofactor.

It catalyses the reaction L-seryl-[protein] + ATP = 3-O-(5'-adenylyl)-L-seryl-[protein] + diphosphate. The enzyme catalyses L-threonyl-[protein] + ATP = 3-O-(5'-adenylyl)-L-threonyl-[protein] + diphosphate. The catalysed reaction is L-tyrosyl-[protein] + ATP = O-(5'-adenylyl)-L-tyrosyl-[protein] + diphosphate. It carries out the reaction L-histidyl-[protein] + UTP = N(tele)-(5'-uridylyl)-L-histidyl-[protein] + diphosphate. It catalyses the reaction L-seryl-[protein] + UTP = O-(5'-uridylyl)-L-seryl-[protein] + diphosphate. The enzyme catalyses L-tyrosyl-[protein] + UTP = O-(5'-uridylyl)-L-tyrosyl-[protein] + diphosphate. Its function is as follows. Nucleotidyltransferase involved in the post-translational modification of proteins. It can catalyze the addition of adenosine monophosphate (AMP) or uridine monophosphate (UMP) to a protein, resulting in modifications known as AMPylation and UMPylation. The sequence is that of Protein nucleotidyltransferase YdiU from Shewanella baltica (strain OS195).